A 60-amino-acid polypeptide reads, in one-letter code: uncharacterized protein (60 aa).

This is an uncharacterized protein from Homo sapiens (Human).